The chain runs to 176 residues: Endoribonuclease YbeY (176 aa).

His117, His121, and His127 together coordinate Zn(2+).

The protein belongs to the endoribonuclease YbeY family. It depends on Zn(2+) as a cofactor.

The protein resides in the cytoplasm. Single strand-specific metallo-endoribonuclease involved in late-stage 70S ribosome quality control and in maturation of the 3' terminus of the 16S rRNA. In Methylocella silvestris (strain DSM 15510 / CIP 108128 / LMG 27833 / NCIMB 13906 / BL2), this protein is Endoribonuclease YbeY.